A 201-amino-acid polypeptide reads, in one-letter code: GTP cyclohydrolase 1 (201 aa).

Cysteine 90, histidine 93, and cysteine 163 together coordinate Zn(2+).

It belongs to the GTP cyclohydrolase I family. Homomer.

It carries out the reaction GTP + H2O = 7,8-dihydroneopterin 3'-triphosphate + formate + H(+). It participates in cofactor biosynthesis; 7,8-dihydroneopterin triphosphate biosynthesis; 7,8-dihydroneopterin triphosphate from GTP: step 1/1. In Streptomyces griseus subsp. griseus (strain JCM 4626 / CBS 651.72 / NBRC 13350 / KCC S-0626 / ISP 5235), this protein is GTP cyclohydrolase 1.